Here is a 562-residue protein sequence, read N- to C-terminus: Arginine--tRNA ligase 1 (562 aa).

Residues 122 to 132 carry the 'HIGH' region motif; it reads PNIAKPFSMGH.

Belongs to the class-I aminoacyl-tRNA synthetase family. As to quaternary structure, monomer.

The protein resides in the cytoplasm. The enzyme catalyses tRNA(Arg) + L-arginine + ATP = L-arginyl-tRNA(Arg) + AMP + diphosphate. The protein is Arginine--tRNA ligase 1 of Bacillus thuringiensis subsp. konkukian (strain 97-27).